Consider the following 177-residue polypeptide: uncharacterized protein (177 aa).

Residues 1 to 175 (MYKNPYGLEI…VFKSIFNSIL (175 aa)) enclose the Macro domain.

This is an uncharacterized protein from Saccharolobus solfataricus (strain ATCC 35092 / DSM 1617 / JCM 11322 / P2) (Sulfolobus solfataricus).